The primary structure comprises 628 residues: Vacuolar-sorting receptor 4 (628 aa).

The N-terminal stretch at 1 to 24 (MKQLLCYLPWLLLLSLVVSPFNEA) is a signal peptide. The Lumenal segment spans residues 25 to 569 (RFVVEKNSLS…SKTGSQVKSA (545 aa)). In terms of domain architecture, PA spans 56-168 (QYGGSMAGTV…GFGEKLKKAI (113 aa)). N148, N294, and N434 each carry an N-linked (GlcNAc...) asparagine glycan. EGF-like domains follow at residues 416-466 (ETNE…SHCE) and 469-516 (GPGR…KKCE). 7 disulfide bridges follow: C420-C438, C427-C447, C449-C465, C473-C493, C480-C501, C503-C515, and C545-C558. An EGF-like 3; calcium-binding domain is found at 517–559 (DINECKEKKACQCPECSCKNTWGSYECSCSGDLLYMRDHDTCI). A helical membrane pass occupies residues 570–590 (WAAVWLIMLSLGLAAAGAYLV). Topologically, residues 591 to 628 (YKYRLRQYMDSEIRAIMAQYMPLDSQPEVPNHTNDERA) are cytoplasmic. Residues 610-613 (YMPL) carry the Tyrosine-based internalization motif motif.

Belongs to the VSR (BP-80) family. Expressed at low levels in seeds, seedlings, roots, stems, leaves, flowers and siliques.

Its subcellular location is the membrane. The protein resides in the golgi apparatus membrane. The protein localises to the cytoplasmic vesicle. It is found in the clathrin-coated vesicle membrane. It localises to the prevacuolar compartment membrane. Vacuolar-sorting receptor (VSR) involved in clathrin-coated vesicles sorting from Golgi apparatus to vacuoles. The protein is Vacuolar-sorting receptor 4 (VSR4) of Arabidopsis thaliana (Mouse-ear cress).